We begin with the raw amino-acid sequence, 150 residues long: Ribosome-binding factor A (150 aa).

Residues 126-150 (EVARDLSHDDDEDGGADEAPRNGDE) are disordered.

It belongs to the RbfA family. In terms of assembly, monomer. Binds 30S ribosomal subunits, but not 50S ribosomal subunits or 70S ribosomes.

It localises to the cytoplasm. Its function is as follows. One of several proteins that assist in the late maturation steps of the functional core of the 30S ribosomal subunit. Associates with free 30S ribosomal subunits (but not with 30S subunits that are part of 70S ribosomes or polysomes). Required for efficient processing of 16S rRNA. May interact with the 5'-terminal helix region of 16S rRNA. The sequence is that of Ribosome-binding factor A from Brucella abortus (strain S19).